The following is a 571-amino-acid chain: Proline--tRNA ligase (571 aa).

The protein belongs to the class-II aminoacyl-tRNA synthetase family. ProS type 1 subfamily. As to quaternary structure, homodimer.

It is found in the cytoplasm. It catalyses the reaction tRNA(Pro) + L-proline + ATP = L-prolyl-tRNA(Pro) + AMP + diphosphate. Catalyzes the attachment of proline to tRNA(Pro) in a two-step reaction: proline is first activated by ATP to form Pro-AMP and then transferred to the acceptor end of tRNA(Pro). As ProRS can inadvertently accommodate and process non-cognate amino acids such as alanine and cysteine, to avoid such errors it has two additional distinct editing activities against alanine. One activity is designated as 'pretransfer' editing and involves the tRNA(Pro)-independent hydrolysis of activated Ala-AMP. The other activity is designated 'posttransfer' editing and involves deacylation of mischarged Ala-tRNA(Pro). The misacylated Cys-tRNA(Pro) is not edited by ProRS. The sequence is that of Proline--tRNA ligase from Actinobacillus succinogenes (strain ATCC 55618 / DSM 22257 / CCUG 43843 / 130Z).